A 381-amino-acid polypeptide reads, in one-letter code: Creatine kinase B-type (381 aa).

The residue at position 4 (serine 4) is a Phosphoserine. Positions 11–98 constitute a Phosphagen kinase N-terminal domain; that stretch reads KLRFPAEDEF…FDPIIEDRHG (88 aa). Threonine 35 carries the phosphothreonine modification. Lysine 45 is covalently cross-linked (Glycyl lysine isopeptide (Lys-Gly) (interchain with G-Cter in ubiquitin)). Valine 72 serves as a coordination point for creatine. Over residues 96-110 the composition is skewed to basic and acidic residues; that stretch reads RHGGYKPSDEHKTDL. The interval 96 to 123 is disordered; that stretch reads RHGGYKPSDEHKTDLNPDNLQGGDDLDP. Residues lysine 101 and lysine 107 each participate in a glycyl lysine isopeptide (Lys-Gly) (interchain with G-Cter in ubiquitin) cross-link. Tyrosine 125 bears the Phosphotyrosine mark. Residues 125–367 form the Phosphagen kinase C-terminal domain; the sequence is YVLSSRVRTG…KLLIEMEQRL (243 aa). ATP is bound by residues 128–132, arginine 130, arginine 132, and histidine 191; that span reads SSRVR. The segment at 130 to 138 is internal MTS-like signal; it reads RVRTGRSIR. Serine 199 bears the Phosphoserine mark. Creatine is bound at residue glutamate 232. Arginine 236 contacts ATP. At tyrosine 269 the chain carries 3'-nitrotyrosine. Serine 285 contacts creatine. Residues arginine 292, 292-296, arginine 320, 320-325, and aspartate 335 contribute to the ATP site; these read RAGVH and RGTGGV. Threonine 322 is modified (phosphothreonine). Lysine 381 participates in a covalent cross-link: Glycyl lysine isopeptide (Lys-Gly) (interchain with G-Cter in ubiquitin).

The protein belongs to the ATP:guanido phosphotransferase family. Dimer of identical or non-identical chains, which can be either B (brain type) or M (muscle type). With MM being the major form in skeletal muscle and myocardium, MB existing in myocardium, and BB existing in many tissues, especially brain. Interacts with SLC12A6 (via C-terminus); the interaction may be required for SLC12A6 potassium-chloride cotransport activity. Ubiquitinated by the ECS(ASB9) complex, leading to its degradation by the proteasome.

It is found in the cytoplasm. The protein localises to the cytosol. The protein resides in the mitochondrion. Its subcellular location is the cell membrane. The enzyme catalyses creatine + ATP = N-phosphocreatine + ADP + H(+). Its function is as follows. Reversibly catalyzes the transfer of phosphate between ATP and various phosphogens (e.g. creatine phosphate). Creatine kinase isoenzymes play a central role in energy transduction in tissues with large, fluctuating energy demands, such as skeletal muscle, heart, brain and spermatozoa. Acts as a key regulator of adaptive thermogenesis as part of the futile creatine cycle: localizes to the mitochondria of thermogenic fat cells and acts by mediating phosphorylation of creatine to initiate a futile cycle of creatine phosphorylation and dephosphorylation. During the futile creatine cycle, creatine and N-phosphocreatine are in a futile cycle, which dissipates the high energy charge of N-phosphocreatine as heat without performing any mechanical or chemical work. In Sus scrofa (Pig), this protein is Creatine kinase B-type (CKB).